A 1158-amino-acid chain; its full sequence is Nuclear receptor-interacting protein 1 (1158 aa).

The tract at residues 1 to 415 is interaction with ZNF366; the sequence is MTHGEELGSD…EESSTPTTID (415 aa). The LXXLL motif 1 signature appears at 21 to 25; it reads LEGLL. The segment at 33 to 56 is disordered; the sequence is SGTAVDKKSAGHNEEDQNFNISGS. A compositionally biased stretch (basic and acidic residues) spans 37-47; it reads VDKKSAGHNEE. The tract at residues 78-333 is repression domain 1; sequence MLHLKKARLL…HLNGQARTSS (256 aa). Position 104 is a phosphoserine (S104). Residue K111 is modified to N6-acetyllysine; alternate. K111 is covalently cross-linked (Glycyl lysine isopeptide (Lys-Gly) (interchain with G-Cter in SUMO2); alternate). Positions 133 to 137 match the LXXLL motif 2 motif; it reads LASLL. K158 carries the N6-acetyllysine modification. Residue K170 forms a Glycyl lysine isopeptide (Lys-Gly) (interchain with G-Cter in SUMO2) linkage. The short motif at 185–189 is the LXXLL motif 3 element; sequence LKTLL. Glycyl lysine isopeptide (Lys-Gly) (interchain with G-Cter in SUMO2) cross-links involve residues K195 and K198. T207 bears the Phosphothreonine mark. S218 bears the Phosphoserine mark. The LXXLL motif 4 motif lies at 266–270; sequence LALLL. 2 positions are modified to N6-acetyllysine: K286 and K310. The residue at position 356 (S356) is a Phosphoserine. Residue K372 forms a Glycyl lysine isopeptide (Lys-Gly) (interchain with G-Cter in SUMO2) linkage. S378 is subject to Phosphoserine. The LXXLL motif 5 signature appears at 380–384; that stretch reads LLHLL. Positions 393 to 435 are disordered; sequence MNGHSHSERGSIFEESSTPTTIDEYSDNNPSFTDDSSGDESSY. Positions 406–435 are enriched in polar residues; it reads EESSTPTTIDEYSDNNPSFTDDSSGDESSY. Residues 410-700 form a repression domain 2 region; sequence TPTTIDEYSD…PTGPEPGLSG (291 aa). Residues 431-472 are required for targeting to small nuclear foci; the sequence is DESSYSNCVPIDLSCKHRTEKSESDQPVSLDNFTQSLLNTWD. The CTBP-binding; principal site signature appears at 440 to 446; sequence PIDLSCK. N6-acetyllysine occurs at positions 446 and 481. S487 carries the post-translational modification Phosphoserine. The short motif at 500-504 is the LXXLL motif 6 element; the sequence is LLQLL. K508 is covalently cross-linked (Glycyl lysine isopeptide (Lys-Gly) (interchain with G-Cter in SUMO2)). S518 carries the phosphoserine modification. Residue K528 is modified to N6-acetyllysine. The interval 540–563 is disordered; sequence IESPSTNRTTPVSTPPLLTSSKAG. Residue S542 is modified to Phosphoserine. Positions 548-560 are enriched in low complexity; that stretch reads TTPVSTPPLLTSS. The residue at position 564 (S564) is a Phosphoserine. Short sequence motifs (CTBP-binding) lie at residues 565–569 and 599–603; these read PINLS and SMDLT. 2 disordered regions span residues 592–622 and 641–663; these read TNTA…AQNS and SSMS…DKPI. A compositionally biased stretch (basic and acidic residues) spans 601–610; that stretch reads DLTKSKDPPG. An N6-acetyllysine modification is found at K606. The segment covering 641 to 659 has biased composition (polar residues); that stretch reads SSMSVEEQRPSKQLLTGNT. S671 carries the post-translational modification Phosphoserine. The short motif at 713–717 is the LXXLL motif 7 element; it reads LQLLL. Residues 716–745 form a disordered region; the sequence is LLGNPNKGKSEKKEKTPLRDESTQEHSERA. Residues 723 to 745 are compositionally biased toward basic and acidic residues; that stretch reads GKSEKKEKTPLRDESTQEHSERA. The segment at 735-885 is repression domain 3; sequence DESTQEHSER…NIVDAANNHS (151 aa). The tract at residues 753–1158 is interaction with ZNF366; it reads VKIKSEPCDD…SVLTIKKESE (406 aa). Residues K756 and K802 each participate in a glycyl lysine isopeptide (Lys-Gly) (interchain with G-Cter in SUMO2) cross-link. S807 carries the phosphoserine modification. The LXXLL motif 8 motif lies at 819–823; sequence LSRLL. Glycyl lysine isopeptide (Lys-Gly) (interchain with G-Cter in SUMO2) cross-links involve residues K850 and K901. Position 931 is an N6-acetyllysine; alternate (K931). Residue K931 forms a Glycyl lysine isopeptide (Lys-Gly) (interchain with G-Cter in SUMO2); alternate linkage. Positions 936 to 940 match the LXXLL motif 9 motif; that stretch reads LKQLL. The CTBP-binding signature appears at 946-950; that stretch reads VRDLS. Positions 950 to 974 are disordered; that stretch reads SPHRSNSVADSKKKGHKNNVTNSKP. Residue S1001 is modified to Phosphoserine. Positions 1061-1074 match the Ligand-dependent nuclear receptor binding motif; the sequence is LTKTNPILYYMLQK. Residues K1105, K1115, and K1154 each participate in a glycyl lysine isopeptide (Lys-Gly) (interchain with G-Cter in SUMO2) cross-link. A repression domain 4 region spans residues 1118–1158; sequence FFNLRSPYNSHMGNNASRPHSANGEVYGLLGSVLTIKKESE.

In terms of assembly, interacts with RARA and RXRB homodimers and RARA/RXRB heterodimers in the presence of ligand. Interacts with HDAC1 and HDAC3 via its N-terminal domain. Interacts with NR2C1 (sumoylated form and via the ligand-binding domain); the interaction results in promoting the repressor activity of NR2C1. Interacts with CTBP1, CTBP2, ESR1, HDAC1, HDAC2, HDAC5, HDAC6, NR2C2, NR3C1, NR3C2, YWHAH, JUN and FOS. Found in a complex with both NR3C1 and YWHAH. Interacts with ZNF366. Interacts with RORA. Acetylation regulates its nuclear translocation and corepressive activity. Acetylation abolishes interaction with CTBP1. Phosphorylation enhances interaction with YWHAH.

It is found in the nucleus. Modulates transcriptional activation by steroid receptors such as NR3C1, NR3C2 and ESR1. Also modulates transcriptional repression by nuclear hormone receptors. Positive regulator of the circadian clock gene expression: stimulates transcription of BMAL1, CLOCK and CRY1 by acting as a coactivator for RORA and RORC. Involved in the regulation of ovarian function. Plays a role in renal development. The protein is Nuclear receptor-interacting protein 1 (NRIP1) of Homo sapiens (Human).